A 327-amino-acid chain; its full sequence is Interleukin-12 subunit beta (327 aa).

An N-terminal signal peptide occupies residues 1–22; sequence MHPQQLVVSWFSLVLLASPIVA. The Ig-like C2-type domain maps to 23–106; that stretch reads MWELEKNVYV…LSRSLLLLHK (84 aa). A disulfide bond links C50 and C90. N223 carries N-linked (GlcNAc...) asparagine glycosylation. Residues 238 to 327 enclose the Fibronectin type-III domain; sequence PPKNLQLRPL…WSEWASVSCS (90 aa).

The protein belongs to the IL-12B family. In terms of assembly, heterodimer with IL12A; disulfide-linked. The heterodimer is known as interleukin IL-12. Heterodimer with IL23A; disulfide-linked. The heterodimer is known as interleukin IL-23. Also secreted as a monomer. Interacts with NBR1; this interaction promotes IL-12 secretion.

It is found in the secreted. In terms of biological role, cytokine that can act as a growth factor for activated T and NK cells, enhance the lytic activity of NK/lymphokine-activated killer cells, and stimulate the production of IFN-gamma by resting PBMC. Functionally, associates with IL23A to form the IL-23 interleukin, a heterodimeric cytokine which functions in innate and adaptive immunity. IL-23 may constitute with IL-17 an acute response to infection in peripheral tissues. IL-23 binds to a heterodimeric receptor complex composed of IL12RB1 and IL23R, activates the Jak-Stat signaling cascade, stimulates memory rather than naive T-cells and promotes production of pro-inflammatory cytokines. IL-23 induces autoimmune inflammation and thus may be responsible for autoimmune inflammatory diseases and may be important for tumorigenesis. The sequence is that of Interleukin-12 subunit beta (IL12B) from Bos taurus (Bovine).